Consider the following 131-residue polypeptide: Small ribosomal subunit protein eS8 (131 aa).

The segment at 11 to 36 is disordered; it reads DLKKPSGGKKGRVRKTKKKALCGGPP. A compositionally biased stretch (basic residues) spans 16-30; the sequence is SGGKKGRVRKTKKKA.

This sequence belongs to the eukaryotic ribosomal protein eS8 family. As to quaternary structure, part of the 30S ribosomal subunit.

This is Small ribosomal subunit protein eS8 from Pyrobaculum islandicum (strain DSM 4184 / JCM 9189 / GEO3).